The sequence spans 492 residues: MKKAILSVSNKTGIVEFAKALTQLNYELYSTGGTKRILDEANVPVRSVSDLTHFPEIMDGRVKTLHPAVHGGILADRNKPQHLNELSEQHIDLIDMVVVNLYPFQQTVANPDVTMDEAIENIDIGGPTMLRAAAKNYKHVTTIVHPADYQEVLTRLRNDSLDESYRQSLMIKVFEHTAEYDEAIVRFFKGDKETLRYGENPQQSAYFVRTSNAKHTIAGAKQLHGKQLSYNNIKDADATLALVKKFDTPAAVAVKHMNPCGVGIGDTIEQAFQHAYEADSQSIFGGIVALNRAVTPELAEQLHSIFLEVIIAPKFTDEALDILKQKKNVRLLEIDMTIDSNEEEFVSVSGGYLVQDKDNYVVPKEEMKVVTEVAPTDEQWEAMLLGWKVVPSVKSNAIILSNNKQTVGIGAGQMNRVGAAKIALERAIEINDHVALVSDGFFPMGDTVELAAQHGIKAIIQPGGSIKDQDSIDMANKHGIAMVVTGTRHFKH.

Residues 1-144 enclose the MGS-like domain; that stretch reads MKKAILSVSN…KNYKHVTTIV (144 aa).

The protein belongs to the PurH family.

The catalysed reaction is (6R)-10-formyltetrahydrofolate + 5-amino-1-(5-phospho-beta-D-ribosyl)imidazole-4-carboxamide = 5-formamido-1-(5-phospho-D-ribosyl)imidazole-4-carboxamide + (6S)-5,6,7,8-tetrahydrofolate. It catalyses the reaction IMP + H2O = 5-formamido-1-(5-phospho-D-ribosyl)imidazole-4-carboxamide. Its pathway is purine metabolism; IMP biosynthesis via de novo pathway; 5-formamido-1-(5-phospho-D-ribosyl)imidazole-4-carboxamide from 5-amino-1-(5-phospho-D-ribosyl)imidazole-4-carboxamide (10-formyl THF route): step 1/1. The protein operates within purine metabolism; IMP biosynthesis via de novo pathway; IMP from 5-formamido-1-(5-phospho-D-ribosyl)imidazole-4-carboxamide: step 1/1. This is Bifunctional purine biosynthesis protein PurH from Staphylococcus aureus (strain bovine RF122 / ET3-1).